Reading from the N-terminus, the 1060-residue chain is Beta-galactosidase (1060 aa).

2 residues coordinate substrate: Asn-110 and Asp-209. Asp-209 is a Na(+) binding site. Mg(2+) contacts are provided by Glu-432, His-434, and Glu-477. Substrate-binding positions include Glu-477 and 553–556; that span reads EYAH. Residue Glu-477 is the Proton donor of the active site. The active-site Nucleophile is the Glu-553. Residue Asn-613 participates in Mg(2+) binding. Phe-617 and Asn-620 together coordinate Na(+). Residues Asn-620 and Trp-1035 each coordinate substrate.

This sequence belongs to the glycosyl hydrolase 2 family. In terms of assembly, homotetramer. Mg(2+) is required as a cofactor. Requires Na(+) as cofactor.

It catalyses the reaction Hydrolysis of terminal non-reducing beta-D-galactose residues in beta-D-galactosides.. The sequence is that of Beta-galactosidase from Yersinia pestis bv. Antiqua (strain Antiqua).